The chain runs to 73 residues: Translation initiation factor IF-1 (73 aa).

Positions 1 to 72 (MSKKDVIELE…SRGRIVYRKK (72 aa)) constitute an S1-like domain.

It belongs to the IF-1 family. As to quaternary structure, component of the 30S ribosomal translation pre-initiation complex which assembles on the 30S ribosome in the order IF-2 and IF-3, IF-1 and N-formylmethionyl-tRNA(fMet); mRNA recruitment can occur at any time during PIC assembly.

The protein resides in the cytoplasm. One of the essential components for the initiation of protein synthesis. Stabilizes the binding of IF-2 and IF-3 on the 30S subunit to which N-formylmethionyl-tRNA(fMet) subsequently binds. Helps modulate mRNA selection, yielding the 30S pre-initiation complex (PIC). Upon addition of the 50S ribosomal subunit IF-1, IF-2 and IF-3 are released leaving the mature 70S translation initiation complex. In Fusobacterium nucleatum subsp. nucleatum (strain ATCC 25586 / DSM 15643 / BCRC 10681 / CIP 101130 / JCM 8532 / KCTC 2640 / LMG 13131 / VPI 4355), this protein is Translation initiation factor IF-1.